A 164-amino-acid polypeptide reads, in one-letter code: Peptidyl-prolyl cis-trans isomerase A-like 4C (164 aa).

Positions 7-163 constitute a PPIase cyclophilin-type domain; it reads FFDITVDGKP…KKITIADCGQ (157 aa).

Belongs to the cyclophilin-type PPIase family. PPIase A subfamily.

It is found in the cytoplasm. It carries out the reaction [protein]-peptidylproline (omega=180) = [protein]-peptidylproline (omega=0). Functionally, PPIases accelerate the folding of proteins. It catalyzes the cis-trans isomerization of proline imidic peptide bonds in oligopeptides. This is Peptidyl-prolyl cis-trans isomerase A-like 4C from Homo sapiens (Human).